The chain runs to 257 residues: 3-deoxy-manno-octulosonate cytidylyltransferase (257 aa).

It belongs to the KdsB family.

The protein localises to the cytoplasm. The catalysed reaction is 3-deoxy-alpha-D-manno-oct-2-ulosonate + CTP = CMP-3-deoxy-beta-D-manno-octulosonate + diphosphate. Its pathway is nucleotide-sugar biosynthesis; CMP-3-deoxy-D-manno-octulosonate biosynthesis; CMP-3-deoxy-D-manno-octulosonate from 3-deoxy-D-manno-octulosonate and CTP: step 1/1. It functions in the pathway bacterial outer membrane biogenesis; lipopolysaccharide biosynthesis. Activates KDO (a required 8-carbon sugar) for incorporation into bacterial lipopolysaccharide in Gram-negative bacteria. The sequence is that of 3-deoxy-manno-octulosonate cytidylyltransferase from Stenotrophomonas maltophilia (strain R551-3).